Here is a 156-residue protein sequence, read N- to C-terminus: Single-stranded DNA-binding protein 1 (156 aa).

The SSB domain maps to M1 to E104. The segment at Q122–P146 is disordered.

In terms of assembly, homotetramer.

This is Single-stranded DNA-binding protein 1 (ssb1) from Staphylococcus aureus (strain MSSA476).